A 218-amino-acid chain; its full sequence is Sec-independent protein translocase protein TatB (218 aa).

Residues 1 to 21 (MFDIGFSELLLVLVIGLVVLG) form a helical membrane-spanning segment. Disordered stretches follow at residues 126-145 (AESA…DVDK) and 174-218 (SSVD…GGDR). The span at 199-218 (HSTDSHGADQPRTHQPGGDR) shows a compositional bias: basic and acidic residues.

This sequence belongs to the TatB family. In terms of assembly, the Tat system comprises two distinct complexes: a TatABC complex, containing multiple copies of TatA, TatB and TatC subunits, and a separate TatA complex, containing only TatA subunits. Substrates initially bind to the TatABC complex, which probably triggers association of the separate TatA complex to form the active translocon.

The protein localises to the cell inner membrane. Its function is as follows. Part of the twin-arginine translocation (Tat) system that transports large folded proteins containing a characteristic twin-arginine motif in their signal peptide across membranes. Together with TatC, TatB is part of a receptor directly interacting with Tat signal peptides. TatB may form an oligomeric binding site that transiently accommodates folded Tat precursor proteins before their translocation. This is Sec-independent protein translocase protein TatB from Yersinia enterocolitica serotype O:8 / biotype 1B (strain NCTC 13174 / 8081).